The primary structure comprises 372 residues: 4-hydroxy-3-methylbut-2-en-1-yl diphosphate synthase (flavodoxin) (372 aa).

Residues Cys270, Cys273, Cys305, and Glu312 each coordinate [4Fe-4S] cluster.

This sequence belongs to the IspG family. [4Fe-4S] cluster serves as cofactor.

The enzyme catalyses (2E)-4-hydroxy-3-methylbut-2-enyl diphosphate + oxidized [flavodoxin] + H2O + 2 H(+) = 2-C-methyl-D-erythritol 2,4-cyclic diphosphate + reduced [flavodoxin]. It functions in the pathway isoprenoid biosynthesis; isopentenyl diphosphate biosynthesis via DXP pathway; isopentenyl diphosphate from 1-deoxy-D-xylulose 5-phosphate: step 5/6. In terms of biological role, converts 2C-methyl-D-erythritol 2,4-cyclodiphosphate (ME-2,4cPP) into 1-hydroxy-2-methyl-2-(E)-butenyl 4-diphosphate. This is 4-hydroxy-3-methylbut-2-en-1-yl diphosphate synthase (flavodoxin) from Salmonella choleraesuis (strain SC-B67).